The sequence spans 90 residues: Gene 56 protein (90 aa).

Positions 1 to 90 (MRTMFTPITI…DYYTASETGL (90 aa)) constitute a Glutaredoxin domain. A disulfide bridge connects residues Cys16 and Cys19.

The polypeptide is Gene 56 protein (56) (Mycobacterium phage D29 (Mycobacteriophage D29)).